The chain runs to 348 residues: Protein RecA (348 aa).

65–72 contributes to the ATP binding site; sequence GPESSGKT. The tract at residues 328–348 is disordered; that stretch reads SKPQAETSARLATQEELADDY.

It belongs to the RecA family.

It is found in the cytoplasm. Functionally, can catalyze the hydrolysis of ATP in the presence of single-stranded DNA, the ATP-dependent uptake of single-stranded DNA by duplex DNA, and the ATP-dependent hybridization of homologous single-stranded DNAs. It interacts with LexA causing its activation and leading to its autocatalytic cleavage. In Ectopseudomonas oleovorans (Pseudomonas oleovorans), this protein is Protein RecA.